Reading from the N-terminus, the 421-residue chain is Acyl-coenzyme A thioesterase 6 (421 aa).

Residues S232, D326, and H360 each act as charge relay system in the active site. A Peroxisome targeting signal motif is present at residues 419–421 (SKI).

This sequence belongs to the C/M/P thioester hydrolase family.

It localises to the peroxisome. Its subcellular location is the cytoplasm. The enzyme catalyses pristanoyl-CoA + H2O = 2,6,10,14-tetramethylpentadecanoate + CoA + H(+). It catalyses the reaction phytanoyl-CoA + H2O = 3,7,11,15-tetramethylhexadecanoate + CoA + H(+). The protein operates within lipid metabolism; fatty acid metabolism. Its function is as follows. Catalyzes the hydrolysis of acyl-CoAs into free fatty acids and coenzyme A (CoASH), regulating their respective intracellular levels. Catalyzes the hydrolysis of phytanoyl-CoA and pristanoyl-CoA, two methyl-branched fatty acids derived from phytol, that enter the body via the diet. This is Acyl-coenzyme A thioesterase 6 from Homo sapiens (Human).